Consider the following 433-residue polypeptide: Glutamyl-tRNA reductase (433 aa).

Residues 49-52 (TCNR), serine 114, 119-121 (EPQ), and glutamine 125 contribute to the substrate site. The active-site Nucleophile is the cysteine 50. 201–206 (GAGETI) serves as a coordination point for NADP(+).

This sequence belongs to the glutamyl-tRNA reductase family. Homodimer.

The enzyme catalyses (S)-4-amino-5-oxopentanoate + tRNA(Glu) + NADP(+) = L-glutamyl-tRNA(Glu) + NADPH + H(+). It functions in the pathway porphyrin-containing compound metabolism; protoporphyrin-IX biosynthesis; 5-aminolevulinate from L-glutamyl-tRNA(Glu): step 1/2. Functionally, catalyzes the NADPH-dependent reduction of glutamyl-tRNA(Glu) to glutamate 1-semialdehyde (GSA). The sequence is that of Glutamyl-tRNA reductase from Histophilus somni (strain 129Pt) (Haemophilus somnus).